A 496-amino-acid polypeptide reads, in one-letter code: MAVELKELTKRSENYSQWYNDLVVKADLAEQSPVRGCMVIKPYGYAIWEKMQRQLDDMFKETGHVNAYFPLLIPKSYLSREAEHVEGFAKECAVVTHYRLKNAEDGSGVIVDPAAKLEEELIIRPTSETIIWSTYKNWINSYRDLPILCNQWANVMRWEMRTRLFLRTAEFLWQEGHTAHATREEAEAEAQKMLHVYGDFAEKYMAVPVIKGVKSANERFAGALDTYTIEGLMQDGKALQCGTSHFLGQNFAKAFNVQFVDKNNKLDYVWATSWGVSTRLMGALIMTHSDDNGLVLPPHLAPIQVVIVPIYKNDEMLKKIDAKVEGIVNKLKAMGISVKYDNADNKRPGFKFADYELKGVPVRLVMGGRDLENNTMEVMRRDTLEKETRSCDGIEEYVQQLLEDIQNNIYQKALNYRNEHIVKVDSYDDFKEQIEKGGFILAHWDGTPETEDRIKEETKATIRCLPFDADEESLTPGKCMVTGKPSARRVLFARAY.

The protein belongs to the class-II aminoacyl-tRNA synthetase family. ProS type 3 subfamily. In terms of assembly, homodimer.

The protein resides in the cytoplasm. It carries out the reaction tRNA(Pro) + L-proline + ATP = L-prolyl-tRNA(Pro) + AMP + diphosphate. Functionally, catalyzes the attachment of proline to tRNA(Pro) in a two-step reaction: proline is first activated by ATP to form Pro-AMP and then transferred to the acceptor end of tRNA(Pro). The chain is Proline--tRNA ligase from Phocaeicola vulgatus (strain ATCC 8482 / DSM 1447 / JCM 5826 / CCUG 4940 / NBRC 14291 / NCTC 11154) (Bacteroides vulgatus).